The sequence spans 426 residues: Melibiose/raffinose/stachyose-binding protein MelE (426 aa).

An N-terminal signal peptide occupies residues 1 to 18; the sequence is MKHTFVLFLSLILLVLPG. A lipid anchor (N-palmitoyl cysteine) is attached at Cys-19. A lipid anchor (S-diacylglycerol cysteine) is attached at Cys-19.

The protein belongs to the bacterial solute-binding protein 1 family. The complex is composed of two ATP-binding proteins (MsmX), two transmembrane proteins (MelC and MelD) and a solute-binding protein (MelE).

The protein resides in the cell membrane. Functionally, part of the ABC transporter complex MelEDC-MsmX involved in melibiose, raffinose and stachyose import. Binds melibiose, raffinose and stachyose. The protein is Melibiose/raffinose/stachyose-binding protein MelE of Bacillus subtilis (strain 168).